The sequence spans 226 residues: Ribonuclease 3 (226 aa).

An RNase III domain is found at 6–128; that stretch reads INRLQRKLGY…LIGGVFLDSD (123 aa). Glu41 serves as a coordination point for Mg(2+). Residue Asp45 is part of the active site. Mg(2+) is bound by residues Asp114 and Glu117. Glu117 is a catalytic residue. One can recognise a DRBM domain in the interval 155-225; it reads DPKTRLQEYL…AEQALKKLEL (71 aa).

Belongs to the ribonuclease III family. In terms of assembly, homodimer. Mg(2+) is required as a cofactor.

It is found in the cytoplasm. The catalysed reaction is Endonucleolytic cleavage to 5'-phosphomonoester.. Its function is as follows. Digests double-stranded RNA. Involved in the processing of primary rRNA transcript to yield the immediate precursors to the large and small rRNAs (23S and 16S). Processes some mRNAs, and tRNAs when they are encoded in the rRNA operon. Processes pre-crRNA and tracrRNA of type II CRISPR loci if present in the organism. The polypeptide is Ribonuclease 3 (Escherichia coli O139:H28 (strain E24377A / ETEC)).